A 30-amino-acid polypeptide reads, in one-letter code: Trypsin inhibitor 2 (30 aa).

Intrachain disulfides connect Cys3–Cys20, Cys10–Cys22, and Cys16–Cys29.

It belongs to the protease inhibitor I7 (squash-type serine protease inhibitor) family.

It is found in the secreted. Inhibits trypsin. In Luffa aegyptiaca (Sponge gourd), this protein is Trypsin inhibitor 2.